The following is an 88-amino-acid chain: Cell division topological specificity factor (88 aa).

The protein belongs to the MinE family.

Prevents the cell division inhibition by proteins MinC and MinD at internal division sites while permitting inhibition at polar sites. This ensures cell division at the proper site by restricting the formation of a division septum at the midpoint of the long axis of the cell. In Psychromonas ingrahamii (strain DSM 17664 / CCUG 51855 / 37), this protein is Cell division topological specificity factor.